The following is a 191-amino-acid chain: Probable nicotinate-nucleotide adenylyltransferase (191 aa).

It belongs to the NadD family.

It carries out the reaction nicotinate beta-D-ribonucleotide + ATP + H(+) = deamido-NAD(+) + diphosphate. Its pathway is cofactor biosynthesis; NAD(+) biosynthesis; deamido-NAD(+) from nicotinate D-ribonucleotide: step 1/1. Functionally, catalyzes the reversible adenylation of nicotinate mononucleotide (NaMN) to nicotinic acid adenine dinucleotide (NaAD). This chain is Probable nicotinate-nucleotide adenylyltransferase, found in Oceanobacillus iheyensis (strain DSM 14371 / CIP 107618 / JCM 11309 / KCTC 3954 / HTE831).